Reading from the N-terminus, the 324-residue chain is Probable UDP-sugar transporter protein SLC35A4 (324 aa).

Residues 1 to 18 (MSVEDGGMPGLARPKQAR) are Cytoplasmic-facing. The chain crosses the membrane as a helical span at residues 19–39 (WTLMLFLSTAMYGAHAPFLAL). The Lumenal segment spans residues 40 to 52 (CHVDGRVPFRPSS). The chain crosses the membrane as a helical span at residues 53–73 (AVLLTELTKLLLCAFSLLVGW). Topologically, residues 74 to 85 (QTWPQGTPPWRQ) are cytoplasmic. The chain crosses the membrane as a helical span at residues 86-106 (AAPFALSALLYGANNNLVIYL). Over 107–142 (QRYMDPSTYQVLSNLKIGSTALLYCLCLGHRLSARQ) the chain is Lumenal. Residues 143 to 163 (GLALLLLMAAGACYASGGFQE) form a helical membrane-spanning segment. At 164-180 (PGNTLPGPRSAAGARPM) the chain is on the cytoplasmic side. A helical membrane pass occupies residues 181-201 (PLHITPLGLLLLILYCLISGL). Over 202–214 (SSVYTELIMKRQR) the chain is Lumenal. Residues 215-235 (LPLALQNLFLYTFGVILNLGL) form a helical membrane-spanning segment. At 236–248 (YAGSGPGPGFLEG) the chain is on the cytoplasmic side. The chain crosses the membrane as a helical span at residues 249 to 271 (FSGWAVLVVLNQAVNGLLMSAVM). Residues 272–279 (KHGSSITR) are Lumenal-facing. A helical transmembrane segment spans residues 280–300 (LFIVSCSLVVNAVLSAVLLQL). The Cytoplasmic segment spans residues 301–324 (QLTATFFLAALLIGLAVCLYYGSP).

The protein belongs to the nucleotide-sugar transporter family. SLC35A subfamily. Found in a complex with SLC35A2 and SLC35A3. Expressed in the kidney, lung, testis, and prostate. Expressed in the brain by sets of neurons, such as the pyramidal cells of the cortex, the Purkinje cells of the cerebellum, and the motoneurons of the brainstem.

It is found in the golgi apparatus membrane. It carries out the reaction CDP-L-ribitol(in) + CDP(out) = CDP-L-ribitol(out) + CDP(in). Functionally, mediates the transport of CDP-ribitol. Does not exhibit CMP-sialic acid, UDP-galactose and UDP-N-acetylglucosamine transport activity. The chain is Probable UDP-sugar transporter protein SLC35A4 from Rattus norvegicus (Rat).